A 981-amino-acid polypeptide reads, in one-letter code: Translation initiation factor IF-2 (981 aa).

The segment at Phe-31–Glu-370 is disordered. Positions Gly-64–Gly-87 are enriched in low complexity. A compositionally biased stretch (pro residues) spans Gly-88–Pro-111. Residues Ala-112 to Ala-121 show a composition bias toward low complexity. Residues Pro-136–Ala-145 are compositionally biased toward pro residues. Residues Ala-146–Ala-165 show a composition bias toward low complexity. Residues Arg-256 to Gly-269 are compositionally biased toward pro residues. Over residues Ala-270–Ala-279 the composition is skewed to low complexity. Positions Pro-280–Gly-339 are enriched in gly residues. A compositionally biased stretch (basic residues) spans Arg-356–Lys-365. Residues Ser-477–Asp-649 enclose the tr-type G domain. A G1 region spans residues Gly-486–Thr-493. GTP is bound at residue Gly-486–Thr-493. The segment at Gly-511 to His-515 is G2. The segment at Asp-536–Gly-539 is G3. Residues Asp-536–His-540 and Asn-590–Asp-593 each bind GTP. The interval Asn-590 to Asp-593 is G4. Residues Ser-626–Lys-628 form a G5 region.

It belongs to the TRAFAC class translation factor GTPase superfamily. Classic translation factor GTPase family. IF-2 subfamily.

The protein localises to the cytoplasm. Functionally, one of the essential components for the initiation of protein synthesis. Protects formylmethionyl-tRNA from spontaneous hydrolysis and promotes its binding to the 30S ribosomal subunits. Also involved in the hydrolysis of GTP during the formation of the 70S ribosomal complex. The polypeptide is Translation initiation factor IF-2 (Rhodococcus erythropolis (strain PR4 / NBRC 100887)).